The primary structure comprises 99 residues: UPF0213 protein PC1_0597 (99 aa).

The GIY-YIG domain maps to 8–83 (PQWYLYILRT…KQLSKNQKER (76 aa)).

Belongs to the UPF0213 family.

The chain is UPF0213 protein PC1_0597 from Pectobacterium carotovorum subsp. carotovorum (strain PC1).